The following is a 362-amino-acid chain: uncharacterized protein (362 aa).

Disordered stretches follow at residues 1-117, 153-172, and 210-266; these read MASK…GLNR, SSAP…GIRK, and RHFD…SSSN. Positions 12–23 are enriched in basic and acidic residues; it reads AKKEKEIKKEIE. The span at 51–70 shows a compositional bias: acidic residues; sequence ENDDTDGDGKEEDAQKEDDI. 3 stretches are compositionally biased toward low complexity: residues 100–112, 153–167, and 241–265; these read NSPP…TRNT, SSAP…GSPS, and VPPS…TSSS.

This is an uncharacterized protein from Caenorhabditis elegans.